A 131-amino-acid polypeptide reads, in one-letter code: MGRDIIANIITSIRNADIDQKGRVKIVSTNITKNIVKILLREGFIENVRKHQESQKNFLVSTLRHRKTRKGNKINLKRISRPGLRIYSNYQQIPKILGGMGIVILSTSRGIITDREARLEKIGGEILCYIW.

The protein belongs to the universal ribosomal protein uS8 family. In terms of assembly, part of the 30S ribosomal subunit.

Its subcellular location is the plastid. It is found in the chloroplast. Functionally, one of the primary rRNA binding proteins, it binds directly to 16S rRNA central domain where it helps coordinate assembly of the platform of the 30S subunit. The protein is Small ribosomal subunit protein uS8c (rps8) of Phalaenopsis aphrodite subsp. formosana (Moth orchid).